The chain runs to 792 residues: Xaa-Pro dipeptidyl-peptidase (792 aa).

Catalysis depends on charge relay system residues Ser-363, Asp-482, and His-513.

The protein belongs to the peptidase S15 family. Homodimer.

It is found in the cytoplasm. The enzyme catalyses Hydrolyzes Xaa-Pro-|- bonds to release unblocked, N-terminal dipeptides from substrates including Ala-Pro-|-p-nitroanilide and (sequentially) Tyr-Pro-|-Phe-Pro-|-Gly-Pro-|-Ile.. Its function is as follows. Removes N-terminal dipeptides sequentially from polypeptides having unsubstituted N-termini provided that the penultimate residue is proline. The protein is Xaa-Pro dipeptidyl-peptidase (pepX) of Lactobacillus delbrueckii subsp. lactis.